Reading from the N-terminus, the 437-residue chain is Methylenetetrahydrofolate--tRNA-(uracil-5-)-methyltransferase TrmFO (437 aa).

Residue 10 to 15 (GAGLAG) participates in FAD binding.

This sequence belongs to the MnmG family. TrmFO subfamily. It depends on FAD as a cofactor.

Its subcellular location is the cytoplasm. It catalyses the reaction uridine(54) in tRNA + (6R)-5,10-methylene-5,6,7,8-tetrahydrofolate + NADH + H(+) = 5-methyluridine(54) in tRNA + (6S)-5,6,7,8-tetrahydrofolate + NAD(+). It carries out the reaction uridine(54) in tRNA + (6R)-5,10-methylene-5,6,7,8-tetrahydrofolate + NADPH + H(+) = 5-methyluridine(54) in tRNA + (6S)-5,6,7,8-tetrahydrofolate + NADP(+). Its function is as follows. Catalyzes the folate-dependent formation of 5-methyl-uridine at position 54 (M-5-U54) in all tRNAs. This chain is Methylenetetrahydrofolate--tRNA-(uracil-5-)-methyltransferase TrmFO, found in Pelotomaculum thermopropionicum (strain DSM 13744 / JCM 10971 / SI).